The sequence spans 110 residues: U32-theraphotoxin-Cg1a (110 aa).

A signal peptide spans 1–19 (MNHCFLILFTLIVFTVVWS). The propeptide occupies 20-43 (LEENEEYPDEDEMIESFMDGYSYR). Disulfide bonds link Cys-49/Cys-63, Cys-56/Cys-69, Cys-60/Cys-105, and Cys-62/Cys-80.

This sequence belongs to the neurotoxin 03 (Tx2) family. 02 subfamily. Expressed by the venom gland.

Its subcellular location is the secreted. Functionally, probable ion channel inhibitor. This Chilobrachys guangxiensis (Chinese earth tiger tarantula) protein is U32-theraphotoxin-Cg1a.